Reading from the N-terminus, the 45-residue chain is Photosystem II reaction center protein K (45 aa).

The propeptide occupies 1–8; the sequence is MDFALLLA. A helical membrane pass occupies residues 24–44; that stretch reads LPLIPLFFLLLAFVWQAAVGF.

This sequence belongs to the PsbK family. In terms of assembly, PSII is composed of 1 copy each of membrane proteins PsbA, PsbB, PsbC, PsbD, PsbE, PsbF, PsbH, PsbI, PsbJ, PsbK, PsbL, PsbM, PsbT, PsbX, PsbY, PsbZ, Psb30/Ycf12, peripheral proteins PsbO, CyanoQ (PsbQ), PsbU, PsbV and a large number of cofactors. It forms dimeric complexes.

The protein localises to the cellular thylakoid membrane. Its function is as follows. One of the components of the core complex of photosystem II (PSII). PSII is a light-driven water:plastoquinone oxidoreductase that uses light energy to abstract electrons from H(2)O, generating O(2) and a proton gradient subsequently used for ATP formation. It consists of a core antenna complex that captures photons, and an electron transfer chain that converts photonic excitation into a charge separation. This Gloeothece citriformis (strain PCC 7424) (Cyanothece sp. (strain PCC 7424)) protein is Photosystem II reaction center protein K.